The primary structure comprises 298 residues: ADP/ATP translocase 1 (298 aa).

Residues 1–7 are Mitochondrial intermembrane-facing; that stretch reads MSDQALS. An N-acetylserine modification is found at Ser2. A Solcar 1 repeat occupies 6–98; the sequence is LSFLKDFLAG…FAFKDKYKQI (93 aa). Ser7 carries the phosphoserine modification. The helical transmembrane segment at 8–37 threads the bilayer; it reads FLKDFLAGGVAAAVSKTAVAPIERVKLLLQ. The Mitochondrial matrix segment spans residues 38–74; that stretch reads VQHASKQISAEKQYKGIIDCVVRIPKEQGFLSFWRGN. Position 52 is an N6,N6,N6-trimethyllysine (Lys52). The chain crosses the membrane as a helical span at residues 75–99; sequence LANVIRYFPTQALNFAFKDKYKQIF. ADP contacts are provided by Arg80 and Lys92. Residues 100–109 lie on the Mitochondrial intermembrane side of the membrane; that stretch reads LGGVDRHKQF. The helical transmembrane segment at 110 to 130 threads the bilayer; it reads WRYFAGNLASGGAAGATSLCF. Solcar repeat units follow at residues 111-201 and 212-297; these read RYFA…AKGM and VSWM…IKKY. Residues 131-178 are Mitochondrial matrix-facing; that stretch reads VYPLDFARTRLAADVGKGAAQREFSGLGNCLTKIFKSDGLRGLYQGFN. Lys147 is subject to N6-succinyllysine. Residue Cys160 is modified to S-nitrosocysteine. Residues 179–199 form a helical membrane-spanning segment; the sequence is VSVQGIIIYRAAYFGVYDTAK. Residues 200–210 are Mitochondrial intermembrane-facing; sequence GMLPDPKNVHI. Residues 211 to 231 form a helical membrane-spanning segment; sequence IVSWMIAQTVTAVAGLVSYPF. Residues 232–273 lie on the Mitochondrial matrix side of the membrane; it reads DTVRRRMMMQSGRKGADIMYTGTVDCWKKIAKDEGAKAFFKG. An ADP-binding site is contributed by Arg235. The tract at residues 235–240 is important for transport activity; that stretch reads RRRMMM. Positions 235–240 match the Nucleotide carrier signature motif motif; that stretch reads RRRMMM. Lys245 and Lys272 each carry N6-succinyllysine. Residues 274 to 291 form a helical membrane-spanning segment; it reads AWSNVLRGMGGAFVLVLY. Residues 292 to 298 are Mitochondrial intermembrane-facing; sequence DEIKKYV.

Belongs to the mitochondrial carrier (TC 2.A.29) family. In terms of assembly, monomer. Found in a complex with ARL2, ARL2BP and SLC25A4/ANT1. Interacts with ARL2BP. Interacts with TIMM44; leading to inhibit the presequence translocase TIMM23, thereby promoting stabilization of PINK1. Post-translationally, under cell death induction, transglutaminated by TGM2. Transglutamination leads to formation of covalent cross-links between a glutamine and the epsilon-amino group of a lysine residue, forming polymers.

It localises to the mitochondrion inner membrane. The protein localises to the membrane. It carries out the reaction ADP(in) + ATP(out) = ADP(out) + ATP(in). The catalysed reaction is H(+)(in) = H(+)(out). With respect to regulation, the matrix-open state (m-state) is inhibited by the membrane-permeable bongkrekic acid (BKA). The cytoplasmic-open state (c-state) is inhibited by the membrane-impermeable toxic inhibitor carboxyatractyloside (CATR). Proton transporter activity is inhibited by ADP:ATP antiporter activity. Its function is as follows. ADP:ATP antiporter that mediates import of ADP into the mitochondrial matrix for ATP synthesis, and export of ATP out to fuel the cell. Cycles between the cytoplasmic-open state (c-state) and the matrix-open state (m-state): operates by the alternating access mechanism with a single substrate-binding site intermittently exposed to either the cytosolic (c-state) or matrix (m-state) side of the inner mitochondrial membrane. In addition to its ADP:ATP antiporter activity, also involved in mitochondrial uncoupling and mitochondrial permeability transition pore (mPTP) activity. Plays a role in mitochondrial uncoupling by acting as a proton transporter: proton transport uncouples the proton flows via the electron transport chain and ATP synthase to reduce the efficiency of ATP production and cause mitochondrial thermogenesis. Proton transporter activity is inhibited by ADP:ATP antiporter activity, suggesting that SLC25A4/ANT1 acts as a master regulator of mitochondrial energy output by maintaining a delicate balance between ATP production (ADP:ATP antiporter activity) and thermogenesis (proton transporter activity). Proton transporter activity requires free fatty acids as cofactor, but does not transport it. Probably mediates mitochondrial uncoupling in tissues that do not express UCP1. Also plays a key role in mPTP opening, a non-specific pore that enables free passage of the mitochondrial membranes to solutes of up to 1.5 kDa, and which contributes to cell death. It is however unclear if SLC25A4/ANT1 constitutes a pore-forming component of mPTP or regulates it. Acts as a regulator of mitophagy independently of ADP:ATP antiporter activity: promotes mitophagy via interaction with TIMM44, leading to inhibit the presequence translocase TIMM23, thereby promoting stabilization of PINK1. The chain is ADP/ATP translocase 1 from Oryctolagus cuniculus (Rabbit).